Reading from the N-terminus, the 293-residue chain is SAGA-associated factor 29 (293 aa).

Positions 12-88 (ELLAELQRLL…KALDKIAEIK (77 aa)) form a coiled coil. In terms of domain architecture, SGF29 C-terminal spans 152–293 (GDYVAKPGDK…VVACKETKKK (142 aa)). Histone H3K4me3 N-terminus binding regions lie at residues 194–196 (DID) and 240–243 (QTTC). The segment at 264–266 (FED) is histone H3K4me3 binding.

The protein belongs to the SGF29 family. As to quaternary structure, interacts with dimethylated and trimethylated 'Lys-4' of histone H3 (H3K4me2 and H3K4me3), with a preference for the trimethylated form (H3K4me3). Component of some SAGA-type complexes. Component of the ADA2A-containing complex (ATAC).

Its subcellular location is the nucleus. In terms of biological role, chromatin reader component of some histone acetyltransferase (HAT) SAGA-type complexes like the TFTC-HAT, ATAC or STAGA complexes. SGF29 specifically recognizes and binds methylated 'Lys-4' of histone H3 (H3K4me), with a preference for trimethylated form (H3K4me3). In the SAGA-type complexes, SGF29 is required to recruit complexes to H3K4me. Also binds non-histone proteins that are methylated on Lys residues. The sequence is that of SAGA-associated factor 29 from Gallus gallus (Chicken).